A 903-amino-acid chain; its full sequence is Valine--tRNA ligase (903 aa).

The segment covering 1–15 (MVCVTDQNNENPSQN) has biased composition (polar residues). The tract at residues 1-22 (MVCVTDQNNENPSQNRADKLPK) is disordered. The 'HIGH' region signature appears at 61-71 (PNVTGQLHMGH). The 'KMSKS' region motif lies at 552 to 556 (KMSKS). Lys-555 is a binding site for ATP. Residues 836 to 902 (TVDVAAERKR…ERITKRLEEL (67 aa)) are a coiled coil.

This sequence belongs to the class-I aminoacyl-tRNA synthetase family. ValS type 1 subfamily. In terms of assembly, monomer.

The protein localises to the cytoplasm. The enzyme catalyses tRNA(Val) + L-valine + ATP = L-valyl-tRNA(Val) + AMP + diphosphate. In terms of biological role, catalyzes the attachment of valine to tRNA(Val). As ValRS can inadvertently accommodate and process structurally similar amino acids such as threonine, to avoid such errors, it has a 'posttransfer' editing activity that hydrolyzes mischarged Thr-tRNA(Val) in a tRNA-dependent manner. The protein is Valine--tRNA ligase of Corynebacterium efficiens (strain DSM 44549 / YS-314 / AJ 12310 / JCM 11189 / NBRC 100395).